The sequence spans 833 residues: MutS protein homolog 5 (833 aa).

Residues 1-45 form a disordered region; sequence MAFRATPGRTPPGPGPRSGIPSASFPSPQPPMAGPGGIEEEDEEE. Residue 591 to 598 coordinates ATP; the sequence is GPNSSGKS.

Belongs to the DNA mismatch repair MutS family. As to quaternary structure, heterooligomer of MSH4 and MSH5. Interacts with HJURP. Interacts with REDIC1.

Involved in DNA mismatch repair and meiotic recombination processes. Facilitates crossovers between homologs during meiosis. This is MutS protein homolog 5 (Msh5) from Mus musculus (Mouse).